The primary structure comprises 146 residues: UPF0178 protein R01393 (146 aa).

This sequence belongs to the UPF0178 family.

The polypeptide is UPF0178 protein R01393 (Rhizobium meliloti (strain 1021) (Ensifer meliloti)).